Here is a 542-residue protein sequence, read N- to C-terminus: Calcium/calmodulin-dependent protein kinase type II subunit beta (542 aa).

The Protein kinase domain maps to 14 to 272; the sequence is YQLYEDIGKG…AHEALKHPWV (259 aa). Residue Tyr17 is modified to Phosphotyrosine. Residues 20 to 28 and Lys43 each bind ATP; that span reads IGKGAFSVV. Catalysis depends on Asp136, which acts as the Proton acceptor. The segment at 283-292 is autoinhibitory domain; that stretch reads HRQETVECLK. Thr287 bears the Phosphothreonine; by autocatalysis mark. The segment at 291–301 is calmodulin-binding; it reads LKKFNARRKLK. Thr306 and Thr307 each carry phosphothreonine; by autocatalysis. Residues 349–407 form a disordered region; the sequence is ADGVKPQTNSTKNSAAATSPKGTLPPAALEPQTTVIHNPVDGIKESSDSTHTTIEDEDT. Residues 354–369 are compositionally biased toward polar residues; the sequence is PQTNSTKNSAAATSPK. Phosphoserine occurs at positions 367, 394, and 397. A phosphothreonine mark is found at Thr400 and Thr401.

It belongs to the protein kinase superfamily. CAMK Ser/Thr protein kinase family. CaMK subfamily. CAMK2 is composed of 4 different chains: alpha (CAMK2A), beta (CAMK2B), gamma (CAMK2G), and delta (CAMK2D). The different isoforms assemble into homo- or heteromultimeric holoenzymes composed of 12 subunits with two hexameric rings stacked one on top of the other. Interacts with SYNGAP1, CAMK2N2 and MPDZ. Interacts with FOXO3. Interacts (when in a kinase inactive state not associated with calmodulin) with ARC; leading to target ARC to inactive synapses. Interacts with CAMK2N1; this interaction requires CAMK2B activation by Ca(2+). Autophosphorylation of Thr-287 following activation by Ca(2+)/calmodulin. Phosphorylation of Thr-287 locks the kinase into an activated state.

Its subcellular location is the cytoplasm. The protein resides in the cytoskeleton. It localises to the microtubule organizing center. The protein localises to the centrosome. It is found in the sarcoplasmic reticulum membrane. Its subcellular location is the synapse. It catalyses the reaction L-seryl-[protein] + ATP = O-phospho-L-seryl-[protein] + ADP + H(+). It carries out the reaction L-threonyl-[protein] + ATP = O-phospho-L-threonyl-[protein] + ADP + H(+). With respect to regulation, activated by Ca(2+)/calmodulin. Binding of calmodulin results in conformational change that relieves intrasteric autoinhibition and allows autophosphorylation of Thr-287 which turns the kinase in a constitutively active form and confers to the kinase a Ca(2+)-independent activity. In terms of biological role, calcium/calmodulin-dependent protein kinase that functions autonomously after Ca(2+)/calmodulin-binding and autophosphorylation, and is involved in dendritic spine and synapse formation, neuronal plasticity and regulation of sarcoplasmic reticulum Ca(2+) transport in skeletal muscle. In neurons, plays an essential structural role in the reorganization of the actin cytoskeleton during plasticity by binding and bundling actin filaments in a kinase-independent manner. This structural function is required for correct targeting of CaMK2A, which acts downstream of NMDAR to promote dendritic spine and synapse formation and maintain synaptic plasticity which enables long-term potentiation (LTP) and hippocampus-dependent learning. In developing hippocampal neurons, promotes arborization of the dendritic tree and in mature neurons, promotes dendritic remodeling. Also regulates the migration of developing neurons. Participates in the modulation of skeletal muscle function in response to exercise. In slow-twitch muscles, is involved in regulation of sarcoplasmic reticulum (SR) Ca(2+) transport and in fast-twitch muscle participates in the control of Ca(2+) release from the SR through phosphorylation of triadin, a ryanodine receptor-coupling factor, and phospholamban (PLN/PLB), an endogenous inhibitor of SERCA2A/ATP2A2. In response to interferon-gamma (IFN-gamma) stimulation, catalyzes phosphorylation of STAT1, stimulating the JAK-STAT signaling pathway. Phosphorylates reticulophagy regulator RETREG1 at 'Ser-147' under endoplasmic reticulum stress conditions which enhances RETREG1 oligomerization and its membrane scission and reticulophagy activity. The sequence is that of Calcium/calmodulin-dependent protein kinase type II subunit beta (CAMK2B) from Bos taurus (Bovine).